Reading from the N-terminus, the 89-residue chain is Large ribosomal subunit protein bL27 (89 aa).

The tract at residues 1 to 21 is disordered; it reads MAHKKAGGSSRNGRDSKGKRL.

Belongs to the bacterial ribosomal protein bL27 family.

The sequence is that of Large ribosomal subunit protein bL27 from Bradyrhizobium diazoefficiens (strain JCM 10833 / BCRC 13528 / IAM 13628 / NBRC 14792 / USDA 110).